Consider the following 353-residue polypeptide: Chemerin-like receptor 2 (353 aa).

Residues 1–41 lie on the Extracellular side of the membrane; that stretch reads MEVSREMLFEELDNYSYALEYYSQEPDAEENVYPGIVHWIS. An N-linked (GlcNAc...) asparagine glycan is attached at N14. A helical transmembrane segment spans residues 42-62; it reads LLLYALAFVLGIPGNAIVIWF. Topologically, residues 63–73 are cytoplasmic; sequence MGFKWKKTVTT. The chain crosses the membrane as a helical span at residues 74–94; that stretch reads LWFLNLAIADFVFVLFLPLYI. Residues 95-112 lie on the Extracellular side of the membrane; the sequence is SYVALSFHWPFGRWLCKL. A disulfide bridge links C110 with C187. A helical membrane pass occupies residues 113–133; sequence NSFIAQLNMFSSVFFLTVISL. Residues 134 to 154 lie on the Cytoplasmic side of the membrane; it reads DRYIHLIHPGLSHPHRTLKNS. Residues 155–175 traverse the membrane as a helical segment; sequence LLVVLFVWLLASLLGGPTLYF. Over 176–210 the chain is Extracellular; it reads RDTVEVNNRIICYNNFQEYELTLMRHHVLTWVKFL. The helical transmembrane segment at 211–231 threads the bilayer; it reads FGYLLPLLTMSSCYLCLIFKT. The Cytoplasmic portion of the chain corresponds to 232 to 247; that stretch reads KKQNILISSKHLWMIL. Residues 248-268 form a helical membrane-spanning segment; the sequence is SVVIAFMVCWTPFHLFSIWEL. The Extracellular portion of the chain corresponds to 269-286; that stretch reads SIHHNSSFQNVLQGGIPL. The helical transmembrane segment at 287–307 threads the bilayer; the sequence is STGLAFLNSCLNPILYVLISK. The Cytoplasmic segment spans residues 308–353; sequence KFQARFRASVAEVLKRSLWEASCSGTVSEQLRSAETKSLSLLETAQ.

This sequence belongs to the chemokine-like receptor (CMKLR) family.

It localises to the cell membrane. Functionally, receptor for chemoattractant adipokine chemerin/RARRES2 suggesting a role for this receptor in the regulation of inflammation and energy homesotasis. Signals mainly via beta-arrestin pathway. Binding of RARRES2 activates weakly G proteins, calcium mobilization and MAPK1/MAPK3 (ERK1/2) phosphorylation too. Acts also as a receptor for TAFA1, mediates its effects on neuronal stem-cell proliferation and differentiation via the activation of ROCK/ERK and ROCK/STAT3 signaling pathway. This chain is Chemerin-like receptor 2 (Cmklr2), found in Rattus norvegicus (Rat).